We begin with the raw amino-acid sequence, 101 residues long: Small nuclear ribonucleoprotein Sm D3 (101 aa).

One can recognise a Sm domain in the interval 6-78 (IPVKLLNEAQ…IKFIVVPDLL (73 aa)).

This sequence belongs to the snRNP core protein family. As to quaternary structure, component of the Sm core complex, present in spliceosomal snRNP U1, U2, U4/U6 and U5. The core complex contains SMB1, SMD1, SMD2, SMD3, SME1, SMX3 and SMX2 (Sm proteins B, D1, D2, D3, E, F and G, respectively), and is probably a heptameric ring structure. SMD3 specifically interacts with SMB1. Belongs to the CWC complex (or CEF1-associated complex), a spliceosome sub-complex reminiscent of a late-stage spliceosome composed of the U2, U5 and U6 snRNAs and at least BUD13, BUD31, BRR2, CDC40, CEF1, CLF1, CUS1, CWC2, CWC15, CWC21, CWC22, CWC23, CWC24, CWC25, CWC27, ECM2, HSH155, IST3, ISY1, LEA1, MSL1, NTC20, PRP8, PRP9, PRP11, PRP19, PRP21, PRP22, PRP45, PRP46, SLU7, SMB1, SMD1, SMD2, SMD3, SMX2, SMX3, SNT309, SNU114, SPP2, SYF1, SYF2, RSE1 and YJU2. Component of the U4/U6-U5 tri-snRNP complex composed of the U4, U6 and U5 snRNAs and at least PRP3, PRP4, PRP6, PRP8, PRP18, PRP31, PRP38, SNU13, SNU23, SNU66, SNU114, SPP381, SMB1, SMD1, SMD2, SMD3, SMX2, SMX3, LSM2, LSM3, LSM4, LSM5, LSM6, LSM7, LSM8, BRR2 and DIB1.

It is found in the cytoplasm. The protein localises to the cytosol. It localises to the nucleus. Plays a role in pre-mRNA splicing as a core component of the spliceosomal U1, U2, U4 and U5 small nuclear ribonucleoproteins (snRNPs), the building blocks of the spliceosome. Also binds telomerase RNA and is required for its accumulation. This Saccharomyces cerevisiae (strain ATCC 204508 / S288c) (Baker's yeast) protein is Small nuclear ribonucleoprotein Sm D3 (SMD3).